We begin with the raw amino-acid sequence, 585 residues long: Amyloid protein-binding protein 2 (585 aa).

TPR repeat units lie at residues 50–83 (QGRL…HHCF), 120–153 (IQVG…CTLH), 206–239 (AALY…ITAG), 288–321 (SDTL…RQSV), 333–367 (HEDL…ITHI), 429–462 (AKHY…KEQL), 471–505 (ALSV…GKKL), and 514–547 (EYDY…NRLR).

As to quaternary structure, component of a CRL2 E3 ubiquitin-protein ligase complex, also named ECS (Elongin BC-CUL2/5-SOCS-box protein) complex, composed of CUL2, Elongin BC (ELOB and ELOC), RBX1 and substrate-specific adapter APPBP2. Interacts with APP; APP interaction inhibits the E3 ubiquitin-protein ligase activity of the CRL2(APPBP2) complex. In terms of processing, rapidly degraded by the proteasome upon overexpression of a C-terminal fragment of APP.

It localises to the nucleus. Its subcellular location is the cytoplasm. The protein localises to the cytoskeleton. It is found in the membrane. Its pathway is protein modification; protein ubiquitination. With respect to regulation, E3 ubiquitin-protein ligase activity of the CRL2(APPBP2) complex is inhibited by APP. Functionally, substrate-recognition component of a Cul2-RING (CRL2) E3 ubiquitin-protein ligase complex of the DesCEND (destruction via C-end degrons) pathway, which recognizes a C-degron located at the extreme C terminus of target proteins, leading to their ubiquitination and degradation. The C-degron recognized by the DesCEND pathway is usually a motif of less than ten residues and can be present in full-length proteins, truncated proteins or proteolytically cleaved forms. The CRL2(APPBP2) complex specifically recognizes proteins with a -Arg-Xaa-Xaa-Gly degron at the C-terminus, leading to their ubiquitination and degradation. The CRL2(APPBP2) complex mediates ubiquitination and degradation of truncated SELENOV selenoproteins produced by failed UGA/Sec decoding, which end with a -Arg-Xaa-Xaa-Gly degron. May play a role in intracellular protein transport: may be involved in the translocation of APP along microtubules toward the cell surface. The protein is Amyloid protein-binding protein 2 of Mus musculus (Mouse).